Here is a 374-residue protein sequence, read N- to C-terminus: Lipopolysaccharide glucosyltransferase WaaG (374 aa).

Residues G15 and D19 each coordinate UDP-alpha-D-glucose. Positions 103–132 (YAEKVAQEKGFLYRLTSRYRHYAAFERATF) are membrane-interacting region. Residues R173, R208, K209, R261, E281, A283, G284, I285, V286, and E289 each contribute to the UDP-alpha-D-glucose site.

Belongs to the glycosyltransferase group 1 family. Glycosyltransferase 4 subfamily.

It localises to the cell inner membrane. The protein operates within bacterial outer membrane biogenesis; LPS core biosynthesis. Inhibited by divalent metal ions such as Mg(2+), Mn(2+), Ca(2+), Zn(2+), Co(2+), Ni(2+) and Cu(2+). Its function is as follows. Glucosyltransferase involved in the biosynthesis of the core oligosaccharide region of lipopolysaccharide (LPS). Catalyzes the addition of the first outer-core glucose from UDP-glucose to the inner-core heptose II. Cannot use other sugar donors, such as UDP-galactose, UDP-glucuronic acid, UDP-galacuronic acid, GDP-mannose, ADP-glucose and GDP-glucose. In the absence of a lipid acceptor, can slowly hydrolyze UDP-glucose. This is Lipopolysaccharide glucosyltransferase WaaG from Escherichia coli (strain K12).